A 443-amino-acid polypeptide reads, in one-letter code: Probable D-serine dehydratase (443 aa).

Lysine 118 is modified (N6-(pyridoxal phosphate)lysine).

Belongs to the serine/threonine dehydratase family. DsdA subfamily. The cofactor is pyridoxal 5'-phosphate.

It carries out the reaction D-serine = pyruvate + NH4(+). This chain is Probable D-serine dehydratase, found in Colwellia psychrerythraea (strain 34H / ATCC BAA-681) (Vibrio psychroerythus).